A 242-amino-acid polypeptide reads, in one-letter code: Aspartate/glutamate leucyltransferase (242 aa).

It belongs to the R-transferase family. Bpt subfamily.

It localises to the cytoplasm. It catalyses the reaction N-terminal L-glutamyl-[protein] + L-leucyl-tRNA(Leu) = N-terminal L-leucyl-L-glutamyl-[protein] + tRNA(Leu) + H(+). The enzyme catalyses N-terminal L-aspartyl-[protein] + L-leucyl-tRNA(Leu) = N-terminal L-leucyl-L-aspartyl-[protein] + tRNA(Leu) + H(+). Functionally, functions in the N-end rule pathway of protein degradation where it conjugates Leu from its aminoacyl-tRNA to the N-termini of proteins containing an N-terminal aspartate or glutamate. The chain is Aspartate/glutamate leucyltransferase from Alcanivorax borkumensis (strain ATCC 700651 / DSM 11573 / NCIMB 13689 / SK2).